A 374-amino-acid polypeptide reads, in one-letter code: N5-carboxyaminoimidazole ribonucleotide synthase (374 aa).

ATP contacts are provided by residues R108, K148, 153–159 (GYDGKGQ), 183–186 (EKYL), E191, H214, and 266–267 (NE). Residues 112 to 296 (KETLKSAGTK…QFDTHILAVT (185 aa)) form the ATP-grasp domain.

It belongs to the PurK/PurT family. In terms of assembly, homodimer.

The catalysed reaction is 5-amino-1-(5-phospho-beta-D-ribosyl)imidazole + hydrogencarbonate + ATP = 5-carboxyamino-1-(5-phospho-D-ribosyl)imidazole + ADP + phosphate + 2 H(+). It participates in purine metabolism; IMP biosynthesis via de novo pathway; 5-amino-1-(5-phospho-D-ribosyl)imidazole-4-carboxylate from 5-amino-1-(5-phospho-D-ribosyl)imidazole (N5-CAIR route): step 1/2. Catalyzes the ATP-dependent conversion of 5-aminoimidazole ribonucleotide (AIR) and HCO(3)(-) to N5-carboxyaminoimidazole ribonucleotide (N5-CAIR). This is N5-carboxyaminoimidazole ribonucleotide synthase from Staphylococcus aureus (strain COL).